Here is a 254-residue protein sequence, read N- to C-terminus: Alcohol dehydrogenase 1 (254 aa).

10-33 (FVAGLGGIGLDTSREIVKSGPKNL) contacts NAD(+). Position 138 (Ser-138) interacts with substrate. The Proton acceptor role is filled by Tyr-151.

Belongs to the short-chain dehydrogenases/reductases (SDR) family. Homodimer.

It carries out the reaction a primary alcohol + NAD(+) = an aldehyde + NADH + H(+). The enzyme catalyses a secondary alcohol + NAD(+) = a ketone + NADH + H(+). The polypeptide is Alcohol dehydrogenase 1 (Adh1) (Drosophila hydei (Fruit fly)).